Consider the following 157-residue polypeptide: Endoribonuclease YbeY (157 aa).

Zn(2+)-binding residues include His118, His122, and His128.

It belongs to the endoribonuclease YbeY family. Requires Zn(2+) as cofactor.

The protein localises to the cytoplasm. Its function is as follows. Single strand-specific metallo-endoribonuclease involved in late-stage 70S ribosome quality control and in maturation of the 3' terminus of the 16S rRNA. This is Endoribonuclease YbeY from Shewanella loihica (strain ATCC BAA-1088 / PV-4).